Reading from the N-terminus, the 1488-residue chain is Chromosome partition protein MukB (1488 aa).

Position 34-41 (Gly34–Ser41) interacts with ATP. Coiled-coil stretches lie at residues Leu326–Gln418, Leu444–His472, and Arg509–Pro602. Residues Pro666–Arg783 form a flexible hinge region. Coiled-coil stretches lie at residues Glu835–Glu923, Glu977–Gly1116, and Val1209–Val1265. Positions Ala1049 to Arg1074 are disordered. The span at Ser1051 to His1065 shows a compositional bias: basic and acidic residues.

It belongs to the SMC family. MukB subfamily. Homodimerization via its hinge domain. Binds to DNA via its C-terminal region. Interacts, and probably forms a ternary complex, with MukE and MukF via its C-terminal region. The complex formation is stimulated by calcium or magnesium. Interacts with tubulin-related protein FtsZ.

The protein localises to the cytoplasm. It localises to the nucleoid. Plays a central role in chromosome condensation, segregation and cell cycle progression. Functions as a homodimer, which is essential for chromosome partition. Involved in negative DNA supercoiling in vivo, and by this means organize and compact chromosomes. May achieve or facilitate chromosome segregation by condensation DNA from both sides of a centrally located replisome during cell division. This is Chromosome partition protein MukB from Salmonella typhimurium (strain LT2 / SGSC1412 / ATCC 700720).